The chain runs to 308 residues: MSIRIHPQEQIDAKSRSGALGPIAPLLLPNLQRLYSQRAERLRMLADGHPLTDYLCFAATLADAQQQALFDNPLTLDLAPVVANAAANGTPPLATQTFARTPHWQRLLLAIIAELRPQAPVHVLPVLEGLEKCAAGEREALASALLAGDYAAVGSDRALFLWAALSLYWAQMASQLPGRAQAEYGEQRHVCPVCGSMPVSSVVHIGGSNGLRYLHCSLCESEWHMVRVKCSNCEESRDLSYWSLESEQAAVKAESCGDCGSYLKILYQEKDSGVDAVADDLATLLLDAKMEEAGFARSSLNPFLFPGE.

It belongs to the FdhE family.

It localises to the cytoplasm. Necessary for formate dehydrogenase activity. This is Protein FdhE homolog from Edwardsiella ictaluri (strain 93-146).